The sequence spans 436 residues: tRNA(Ile)-lysidine synthase (436 aa).

27 to 32 (SGGVDS) contacts ATP.

This sequence belongs to the tRNA(Ile)-lysidine synthase family.

It localises to the cytoplasm. It catalyses the reaction cytidine(34) in tRNA(Ile2) + L-lysine + ATP = lysidine(34) in tRNA(Ile2) + AMP + diphosphate + H(+). Functionally, ligates lysine onto the cytidine present at position 34 of the AUA codon-specific tRNA(Ile) that contains the anticodon CAU, in an ATP-dependent manner. Cytidine is converted to lysidine, thus changing the amino acid specificity of the tRNA from methionine to isoleucine. The polypeptide is tRNA(Ile)-lysidine synthase (Vibrio vulnificus (strain CMCP6)).